The following is a 154-amino-acid chain: Crossover junction endodeoxyribonuclease RuvC (154 aa).

Catalysis depends on residues aspartate 7, glutamate 67, and aspartate 139. Mg(2+) is bound by residues aspartate 7, glutamate 67, and aspartate 139.

It belongs to the RuvC family. Homodimer which binds Holliday junction (HJ) DNA. The HJ becomes 2-fold symmetrical on binding to RuvC with unstacked arms; it has a different conformation from HJ DNA in complex with RuvA. In the full resolvosome a probable DNA-RuvA(4)-RuvB(12)-RuvC(2) complex forms which resolves the HJ. Mg(2+) serves as cofactor.

It is found in the cytoplasm. It catalyses the reaction Endonucleolytic cleavage at a junction such as a reciprocal single-stranded crossover between two homologous DNA duplexes (Holliday junction).. The RuvA-RuvB-RuvC complex processes Holliday junction (HJ) DNA during genetic recombination and DNA repair. Endonuclease that resolves HJ intermediates. Cleaves cruciform DNA by making single-stranded nicks across the HJ at symmetrical positions within the homologous arms, yielding a 5'-phosphate and a 3'-hydroxyl group; requires a central core of homology in the junction. The consensus cleavage sequence is 5'-(A/T)TT(C/G)-3'. Cleavage occurs on the 3'-side of the TT dinucleotide at the point of strand exchange. HJ branch migration catalyzed by RuvA-RuvB allows RuvC to scan DNA until it finds its consensus sequence, where it cleaves and resolves the cruciform DNA. The sequence is that of Crossover junction endodeoxyribonuclease RuvC from Prochlorococcus marinus (strain NATL1A).